The primary structure comprises 105 residues: Protein U4 (105 aa).

The chain crosses the membrane as a helical span at residues 5–25 (FLLFLLLLVLVINPSLVVNMV).

Belongs to the nanovirus U4 protein family.

It localises to the membrane. This Faba bean necrotic yellows virus (isolate Egyptian EV1-93) (FBNYV) protein is Protein U4 (DNA-U4).